Here is a 471-residue protein sequence, read N- to C-terminus: UTP--glucose-1-phosphate uridylyltransferase (471 aa).

UTP contacts are provided by residues 87–90 (LNGG), Lys-101, Gln-164, and Gly-193. 89-90 (GG) is a substrate binding site. Substrate is bound by residues His-194 and 222–224 (NSD). Positions 224 and 362 each coordinate UTP.

This sequence belongs to the UDPGP type 1 family.

Its subcellular location is the cytoplasm. It carries out the reaction alpha-D-glucose 1-phosphate + UTP + H(+) = UDP-alpha-D-glucose + diphosphate. Its function is as follows. Plays a central role as a glucosyl donor in cellular metabolic pathways. This is UTP--glucose-1-phosphate uridylyltransferase from Pyrus pyrifolia (Chinese pear).